The primary structure comprises 322 residues: UDP-N-acetylenolpyruvoylglucosamine reductase (322 aa).

Positions 36-202 constitute an FAD-binding PCMH-type domain; it reads RAGGPAQVLF…TSVLFEGVPG (167 aa). Residue Arg-182 is part of the active site. Ser-231 (proton donor) is an active-site residue. Glu-301 is a catalytic residue.

It belongs to the MurB family. FAD serves as cofactor.

It is found in the cytoplasm. It catalyses the reaction UDP-N-acetyl-alpha-D-muramate + NADP(+) = UDP-N-acetyl-3-O-(1-carboxyvinyl)-alpha-D-glucosamine + NADPH + H(+). It functions in the pathway cell wall biogenesis; peptidoglycan biosynthesis. Functionally, cell wall formation. In Brucella abortus (strain S19), this protein is UDP-N-acetylenolpyruvoylglucosamine reductase.